Here is a 102-residue protein sequence, read N- to C-terminus: Small ribosomal subunit protein uS10 (102 aa).

This sequence belongs to the universal ribosomal protein uS10 family. As to quaternary structure, part of the 30S ribosomal subunit.

In terms of biological role, involved in the binding of tRNA to the ribosomes. The chain is Small ribosomal subunit protein uS10 from Arthrobacter sp. (strain FB24).